Reading from the N-terminus, the 184-residue chain is ATP synthase subunit b (184 aa).

The chain crosses the membrane as a helical span at residues 4–24 (LSVLFALVASPALAASGPFFS).

It belongs to the ATPase B chain family. In terms of assembly, F-type ATPases have 2 components, F(1) - the catalytic core - and F(0) - the membrane proton channel. F(1) has five subunits: alpha(3), beta(3), gamma(1), delta(1), epsilon(1). F(0) has three main subunits: a(1), b(2) and c(10-14). The alpha and beta chains form an alternating ring which encloses part of the gamma chain. F(1) is attached to F(0) by a central stalk formed by the gamma and epsilon chains, while a peripheral stalk is formed by the delta and b chains.

The protein localises to the cell inner membrane. Functionally, f(1)F(0) ATP synthase produces ATP from ADP in the presence of a proton or sodium gradient. F-type ATPases consist of two structural domains, F(1) containing the extramembraneous catalytic core and F(0) containing the membrane proton channel, linked together by a central stalk and a peripheral stalk. During catalysis, ATP synthesis in the catalytic domain of F(1) is coupled via a rotary mechanism of the central stalk subunits to proton translocation. Its function is as follows. Component of the F(0) channel, it forms part of the peripheral stalk, linking F(1) to F(0). This chain is ATP synthase subunit b, found in Paracoccus denitrificans (strain Pd 1222).